The sequence spans 293 residues: Energy-coupling factor transporter ATP-binding protein EcfA2 (293 aa).

The region spanning 3-246 (ITFQKVEHRY…ADELEKIGVD (244 aa)) is the ABC transporter domain. ATP is bound at residue 40-47 (GHTGSGKS).

Belongs to the ABC transporter superfamily. Energy-coupling factor EcfA family. Forms a stable energy-coupling factor (ECF) transporter complex composed of 2 membrane-embedded substrate-binding proteins (S component), 2 ATP-binding proteins (A component) and 2 transmembrane proteins (T component).

It is found in the cell membrane. In terms of biological role, ATP-binding (A) component of a common energy-coupling factor (ECF) ABC-transporter complex. Unlike classic ABC transporters this ECF transporter provides the energy necessary to transport a number of different substrates. This is Energy-coupling factor transporter ATP-binding protein EcfA2 from Bacillus cereus (strain ZK / E33L).